Here is a 206-residue protein sequence, read N- to C-terminus: Ribosomal RNA large subunit methyltransferase E (206 aa).

5 residues coordinate S-adenosyl-L-methionine: Gly-60, Trp-62, Asp-80, Asp-96, and Asp-121. Catalysis depends on Lys-161, which acts as the Proton acceptor.

This sequence belongs to the class I-like SAM-binding methyltransferase superfamily. RNA methyltransferase RlmE family.

It localises to the cytoplasm. The catalysed reaction is uridine(2552) in 23S rRNA + S-adenosyl-L-methionine = 2'-O-methyluridine(2552) in 23S rRNA + S-adenosyl-L-homocysteine + H(+). Specifically methylates the uridine in position 2552 of 23S rRNA at the 2'-O position of the ribose in the fully assembled 50S ribosomal subunit. In Legionella pneumophila (strain Lens), this protein is Ribosomal RNA large subunit methyltransferase E.